A 68-amino-acid chain; its full sequence is DNA-directed RNA polymerase subunit omega (68 aa).

It belongs to the RNA polymerase subunit omega family. As to quaternary structure, the RNAP catalytic core consists of 2 alpha, 1 beta, 1 beta' and 1 omega subunit. When a sigma factor is associated with the core the holoenzyme is formed, which can initiate transcription.

The catalysed reaction is RNA(n) + a ribonucleoside 5'-triphosphate = RNA(n+1) + diphosphate. Promotes RNA polymerase assembly. Latches the N- and C-terminal regions of the beta' subunit thereby facilitating its interaction with the beta and alpha subunits. The sequence is that of DNA-directed RNA polymerase subunit omega from Citrifermentans bemidjiense (strain ATCC BAA-1014 / DSM 16622 / JCM 12645 / Bem) (Geobacter bemidjiensis).